A 381-amino-acid chain; its full sequence is 1-deoxy-D-xylulose 5-phosphate reductoisomerase (381 aa).

Positions 10, 11, 12, 13, 36, 37, 38, and 122 each coordinate NADPH. Residue lysine 123 participates in 1-deoxy-D-xylulose 5-phosphate binding. Position 124 (glutamate 124) interacts with NADPH. A Mn(2+)-binding site is contributed by aspartate 148. Residues serine 149, glutamate 150, serine 173, and histidine 196 each coordinate 1-deoxy-D-xylulose 5-phosphate. Glutamate 150 contacts Mn(2+). Glycine 202 is a binding site for NADPH. The 1-deoxy-D-xylulose 5-phosphate site is built by serine 209, asparagine 214, lysine 215, and glutamate 218. Glutamate 218 contacts Mn(2+).

It belongs to the DXR family. Mg(2+) serves as cofactor. It depends on Mn(2+) as a cofactor.

It catalyses the reaction 2-C-methyl-D-erythritol 4-phosphate + NADP(+) = 1-deoxy-D-xylulose 5-phosphate + NADPH + H(+). The protein operates within isoprenoid biosynthesis; isopentenyl diphosphate biosynthesis via DXP pathway; isopentenyl diphosphate from 1-deoxy-D-xylulose 5-phosphate: step 1/6. In terms of biological role, catalyzes the NADPH-dependent rearrangement and reduction of 1-deoxy-D-xylulose-5-phosphate (DXP) to 2-C-methyl-D-erythritol 4-phosphate (MEP). This is 1-deoxy-D-xylulose 5-phosphate reductoisomerase from Desulfitobacterium hafniense (strain DSM 10664 / DCB-2).